The primary structure comprises 446 residues: Signal recognition particle 54 kDa protein (446 aa).

GTP contacts are provided by residues 104-111 (GLQGSGKT), 184-188 (DTAGR), and 242-245 (TKMD).

Belongs to the GTP-binding SRP family. SRP54 subfamily. Part of the signal recognition particle protein translocation system, which is composed of SRP and FtsY. Archaeal SRP consists of a 7S RNA molecule of 300 nucleotides and two protein subunits: SRP54 and SRP19.

Its subcellular location is the cytoplasm. It carries out the reaction GTP + H2O = GDP + phosphate + H(+). Its function is as follows. Involved in targeting and insertion of nascent membrane proteins into the cytoplasmic membrane. Binds to the hydrophobic signal sequence of the ribosome-nascent chain (RNC) as it emerges from the ribosomes. The SRP-RNC complex is then targeted to the cytoplasmic membrane where it interacts with the SRP receptor FtsY. The polypeptide is Signal recognition particle 54 kDa protein (Methanocorpusculum labreanum (strain ATCC 43576 / DSM 4855 / Z)).